The primary structure comprises 250 residues: Ribosomal RNA small subunit methyltransferase J (250 aa).

Residues 101–102 (RD), 117–118 (ER), 153–154 (SS), and aspartate 171 each bind S-adenosyl-L-methionine.

The protein belongs to the methyltransferase superfamily. RsmJ family.

It is found in the cytoplasm. The catalysed reaction is guanosine(1516) in 16S rRNA + S-adenosyl-L-methionine = N(2)-methylguanosine(1516) in 16S rRNA + S-adenosyl-L-homocysteine + H(+). Specifically methylates the guanosine in position 1516 of 16S rRNA. This Shigella boydii serotype 18 (strain CDC 3083-94 / BS512) protein is Ribosomal RNA small subunit methyltransferase J.